The sequence spans 1300 residues: Serine protease EspP (1300 aa).

The N-terminal stretch at 1–55 (MNKIYSLKYSHITGGLIAVSELSGRVSSRATGKKKHKRILALCFLGLLQSSYSFA) is a signal peptide. One can recognise a Peptidase S6 domain in the interval 57 to 311 (QMDISNFYIR…NQTTIDNLKN (255 aa)). Catalysis depends on charge relay system residues His127, Asp156, and Ser263. The region spanning 1034-1300 (DINGEAGAWA…AVNANFRYSF (267 aa)) is the Autotransporter domain.

Cleaved to release the mature protein from the outer membrane.

The protein localises to the periplasm. It is found in the secreted. The protein resides in the cell surface. It localises to the cell outer membrane. Inhibition of cytotoxic activity by phenylmethylsulfonyl fluoride. In terms of biological role, serine protease capable of cleaving pepsin A and human coagulation factor V, which may contribute to the mucosal hemorrhage observed in hemorrhagic colitis. The polypeptide is Serine protease EspP (espP) (Escherichia coli O157:H7).